The sequence spans 942 residues: DNA polymerase I (942 aa).

The region spanning 177-269 (EPDQLADLRG…LEAARIGVYD (93 aa)) is the 5'-3' exonuclease domain. The 183-residue stretch at 340-522 (TIVRDATALA…LTERLQRQLE (183 aa)) folds into the 3'-5' exonuclease domain.

The protein belongs to the DNA polymerase type-A family. In terms of assembly, single-chain monomer with multiple functions.

It carries out the reaction DNA(n) + a 2'-deoxyribonucleoside 5'-triphosphate = DNA(n+1) + diphosphate. Its function is as follows. In addition to polymerase activity, this DNA polymerase exhibits 3'-5' and 5'-3' exonuclease activity. The polypeptide is DNA polymerase I (polA) (Chloroflexus aurantiacus (strain ATCC 29366 / DSM 635 / J-10-fl)).